A 687-amino-acid polypeptide reads, in one-letter code: Sphingoid long chain base kinase 5 (687 aa).

Positions methionine 1 to glutamine 20 are disordered. Residues cysteine 91 and cysteine 94 are each lipidated (S-palmitoyl cysteine; by AKR1). Residues isoleucine 101 to leucine 116 are compositionally biased toward basic and acidic residues. Disordered stretches follow at residues isoleucine 101 to glutamine 130 and aspartate 180 to threonine 207. Low complexity predominate over residues asparagine 193–threonine 207. The DAGKc domain maps to arginine 266–serine 405. Residues asparagine 276–phenylalanine 278 and threonine 308 each bind ATP. A substrate-binding site is contributed by serine 333–glycine 336. Aspartate 335 functions as the Proton donor/acceptor in the catalytic mechanism. Residues glutamate 340, glycine 366–glycine 368, arginine 434, and arginine 440 each bind ATP. Positions glutamate 506–aspartate 524 are enriched in acidic residues. The tract at residues glutamate 506 to serine 525 is disordered. Residue aspartate 652 to glutamate 654 coordinates ATP.

The protein localises to the golgi apparatus membrane. The catalysed reaction is (4R)-hydroxysphinganine + ATP = (4R)-hydroxysphinganine 1-phosphate + ADP + H(+). It carries out the reaction a sphingoid base + ATP = a sphingoid 1-phosphate + ADP + H(+). The enzyme catalyses sphinganine + ATP = sphinganine 1-phosphate + ADP + H(+). Its function is as follows. Catalyzes the phosphorylation of the sphingoid long chain bases dihydrosphingosine (DHS or sphinganine) and phytosphingosine (PHS) to form dihydrosphingosine 1-phosphate (DHS-1P) and phytosphingosine 1-phosphate (PHS-1P) respectively. Redundant to LCB4, is only responsible for few percent of the total activity. Involved in the biosynthesis of sphingolipids and ceramides. Involved in heat-induced transient cell cycle arrest. Accumulation of phosphorylated sphingoid long chain bases (LCBPs) stimulates calcium influx and activates calcineurin signaling. Involved in heat-stress resistance. The chain is Sphingoid long chain base kinase 5 (LCB5) from Saccharomyces cerevisiae (strain ATCC 204508 / S288c) (Baker's yeast).